The following is a 598-amino-acid chain: tRNA(Met) cytidine acetyltransferase TmcA (598 aa).

Residues Gln141, 163–172 (GRGKSTLAGK), and Arg288 contribute to the ATP site. Residues 332–490 (TDLRRLFDAD…HSAMMLYPLS (159 aa)) form the N-acetyltransferase domain. Acetyl-CoA is bound by residues 411-413 (IAV), 418-424 (QNQGIGS), and Arg462.

This sequence belongs to the RNA cytidine acetyltransferase family. TmcA subfamily.

Its subcellular location is the cytoplasm. It catalyses the reaction cytidine(34) in elongator tRNA(Met) + acetyl-CoA + ATP + H2O = N(4)-acetylcytidine(34) in elongator tRNA(Met) + ADP + phosphate + CoA + H(+). Its function is as follows. Catalyzes the formation of N(4)-acetylcytidine (ac(4)C) at the wobble position of tRNA(Met), by using acetyl-CoA as an acetyl donor and ATP (or GTP). The polypeptide is tRNA(Met) cytidine acetyltransferase TmcA (Haemophilus ducreyi (strain 35000HP / ATCC 700724)).